The following is a 94-amino-acid chain: Putative testis-specific prion protein (94 aa).

The N-terminal stretch at 1–18 (MQHSLVFFFAVILHLSHL) is a signal peptide. N-linked (GlcNAc...) asparagine glycosylation is present at N44.

Specifically expressed in adult testis.

The protein resides in the secreted. The chain is Putative testis-specific prion protein (PRNT) from Homo sapiens (Human).